We begin with the raw amino-acid sequence, 206 residues long: Large ribosomal subunit protein uL4 (206 aa).

A disordered region spans residues 47–94 (NRAQKDRSEINKSTKKPFRQKGTGRARAGRASSPLWRGGGKVFPNSPD). Positions 49–58 (AQKDRSEINK) are enriched in basic and acidic residues. Basic residues predominate over residues 59–74 (STKKPFRQKGTGRARA).

This sequence belongs to the universal ribosomal protein uL4 family. Part of the 50S ribosomal subunit.

One of the primary rRNA binding proteins, this protein initially binds near the 5'-end of the 23S rRNA. It is important during the early stages of 50S assembly. It makes multiple contacts with different domains of the 23S rRNA in the assembled 50S subunit and ribosome. Its function is as follows. Forms part of the polypeptide exit tunnel. The chain is Large ribosomal subunit protein uL4 from Laribacter hongkongensis (strain HLHK9).